We begin with the raw amino-acid sequence, 295 residues long: Methionine aminopeptidase (295 aa).

Residue His62 participates in substrate binding. Positions 82, 93, and 153 each coordinate a divalent metal cation. His161 serves as a coordination point for substrate. Residues Glu187 and Glu280 each coordinate a divalent metal cation.

It belongs to the peptidase M24A family. Methionine aminopeptidase archaeal type 2 subfamily. In terms of assembly, monomer. Co(2+) serves as cofactor. Zn(2+) is required as a cofactor. The cofactor is Mn(2+). Requires Fe(2+) as cofactor.

The catalysed reaction is Release of N-terminal amino acids, preferentially methionine, from peptides and arylamides.. Functionally, removes the N-terminal methionine from nascent proteins. The N-terminal methionine is often cleaved when the second residue in the primary sequence is small and uncharged (Met-Ala-, Cys, Gly, Pro, Ser, Thr, or Val). In Pyrococcus horikoshii (strain ATCC 700860 / DSM 12428 / JCM 9974 / NBRC 100139 / OT-3), this protein is Methionine aminopeptidase.